The chain runs to 169 residues: Disulfide bond formation protein B (169 aa).

Topologically, residues 1–13 (MQALNHFSRIRLS) are cytoplasmic. A helical transmembrane segment spans residues 14-30 (WFLLLLCIIFFEASALT). Residues 31–48 (FQHIMKLPPCVMCIYERV) are Periplasmic-facing. Cysteines 40 and 43 form a disulfide. A helical transmembrane segment spans residues 49–64 (AMMGIGGAAIIGLLNP). Residues 65–71 (NNLIIRW) are Cytoplasmic-facing. Residues 72–89 (CGFIAWGISAGWGLKLAL) form a helical membrane-spanning segment. Topologically, residues 90–144 (EHVDFQLNPSPFSTCDLFVTFPSWAPLNKWAPWMFEAYGDCSKIVWQFLTLTMPQ) are periplasmic. Residues C104 and C130 are joined by a disulfide bond. Residues 145–163 (WLVIIFAGNLIALAIFVIA) form a helical membrane-spanning segment. Residues 164-169 (QFFNKK) are Cytoplasmic-facing.

Belongs to the DsbB family.

The protein resides in the cell inner membrane. Functionally, required for disulfide bond formation in some periplasmic proteins. Acts by oxidizing the DsbA protein. The sequence is that of Disulfide bond formation protein B from Aliivibrio fischeri (strain ATCC 700601 / ES114) (Vibrio fischeri).